The following is a 539-amino-acid chain: Chaperonin GroEL (539 aa).

ATP is bound by residues 29-32 (TLGP), 86-90 (DGTTT), Gly-413, 477-479 (DAL), and Asp-493.

Belongs to the chaperonin (HSP60) family. As to quaternary structure, forms a cylinder of 14 subunits composed of two heptameric rings stacked back-to-back. Interacts with the co-chaperonin GroES.

Its subcellular location is the cytoplasm. It carries out the reaction ATP + H2O + a folded polypeptide = ADP + phosphate + an unfolded polypeptide.. Functionally, together with its co-chaperonin GroES, plays an essential role in assisting protein folding. The GroEL-GroES system forms a nano-cage that allows encapsulation of the non-native substrate proteins and provides a physical environment optimized to promote and accelerate protein folding. The polypeptide is Chaperonin GroEL (Clostridium perfringens (strain ATCC 13124 / DSM 756 / JCM 1290 / NCIMB 6125 / NCTC 8237 / Type A)).